A 904-amino-acid polypeptide reads, in one-letter code: Protein translocase subunit SecA (904 aa).

Residues Q89, G107–T111, and D502 each bind ATP. Positions 886, 888, 897, and 898 each coordinate Zn(2+).

The protein belongs to the SecA family. Monomer and homodimer. Part of the essential Sec protein translocation apparatus which comprises SecA, SecYEG and auxiliary proteins SecDF-YajC and YidC. Zn(2+) serves as cofactor.

It is found in the cell inner membrane. The protein localises to the cytoplasm. It catalyses the reaction ATP + H2O + cellular proteinSide 1 = ADP + phosphate + cellular proteinSide 2.. In terms of biological role, part of the Sec protein translocase complex. Interacts with the SecYEG preprotein conducting channel. Has a central role in coupling the hydrolysis of ATP to the transfer of proteins into and across the cell membrane, serving both as a receptor for the preprotein-SecB complex and as an ATP-driven molecular motor driving the stepwise translocation of polypeptide chains across the membrane. This Rhizobium etli (strain CIAT 652) protein is Protein translocase subunit SecA.